We begin with the raw amino-acid sequence, 350 residues long: F(420)H(2) dehydrogenase subunit H (350 aa).

Transmembrane regions (helical) follow at residues 21–41 (GTVGLVLVGAIFLGGMAAVWI), 94–114 (VFMLTSLFLMLVAIPVGAVFI), 128–148 (ISILFIEAVSAINIFGIFMAA), 173–193 (PLGIAIVSVAVMTGSLNIIDI), 200–220 (FVWNIFLQPIGFVVFFIALMA), 261–281 (ILGSFLVALLFLGGWNVPAFV), 288–308 (GLIAPTGILLLKTVLVLMTII), and 330–350 (LLPLSLLNLAWAVGLGLYLGA).

It belongs to the complex I subunit 1 family. In terms of assembly, the FPO complex is composed of at least 13 different subunits. FpoA, FpoH, FpoJ, FpoK, FpoL, FpoM and FpoN proteins constitute the membrane sector of the complex.

The protein localises to the cell membrane. It carries out the reaction methanophenazine + reduced coenzyme F420-(gamma-L-Glu)(n) = dihydromethanophenazine + oxidized coenzyme F420-(gamma-L-Glu)(n) + H(+). In terms of biological role, component of the F(420)H(2) dehydrogenase (FPO complex) which is part of the energy-conserving F(420)H(2):heterodisulfide oxidoreductase system. The membrane-bound electron transfer system of the complex plays an important role in the metabolism of methylotrophic methanogens when the organisms grow on methanol or methylamines. Catalyzes the oxidation of methanophenazine to dihydromethanophenazine. It shuttles electrons from F(420)H(2), via FAD and iron-sulfur (Fe-S) centers, to methanophenazine (an electron carrier in the membrane). It couples the redox reaction to proton translocation (for every two electrons transferred, two hydrogen ions are translocated across the cytoplasmic membrane), and thus conserves the redox energy in a proton gradient. It also catalyzes the oxidation of F(420)H(2) with quinones such as 2,3-dimethyl-1,4-naphthoquinone, 2-methyl-1,4-naphthoquinone and tetramethyl-p-benzoquinone. In Methanosarcina mazei (strain ATCC BAA-159 / DSM 3647 / Goe1 / Go1 / JCM 11833 / OCM 88) (Methanosarcina frisia), this protein is F(420)H(2) dehydrogenase subunit H.